We begin with the raw amino-acid sequence, 359 residues long: 3-dehydroquinate synthase (359 aa).

NAD(+)-binding positions include 71-76 (DGEAYK), 105-109 (GVVGD), 129-130 (TT), lysine 142, and lysine 151. 3 residues coordinate Zn(2+): glutamate 184, histidine 247, and histidine 264.

It belongs to the sugar phosphate cyclases superfamily. Dehydroquinate synthase family. The cofactor is Co(2+). Zn(2+) is required as a cofactor. NAD(+) serves as cofactor.

It is found in the cytoplasm. It carries out the reaction 7-phospho-2-dehydro-3-deoxy-D-arabino-heptonate = 3-dehydroquinate + phosphate. It participates in metabolic intermediate biosynthesis; chorismate biosynthesis; chorismate from D-erythrose 4-phosphate and phosphoenolpyruvate: step 2/7. In terms of biological role, catalyzes the conversion of 3-deoxy-D-arabino-heptulosonate 7-phosphate (DAHP) to dehydroquinate (DHQ). The protein is 3-dehydroquinate synthase of Burkholderia cenocepacia (strain ATCC BAA-245 / DSM 16553 / LMG 16656 / NCTC 13227 / J2315 / CF5610) (Burkholderia cepacia (strain J2315)).